Here is a 526-residue protein sequence, read N- to C-terminus: 4-alpha-glucanotransferase (526 aa).

It belongs to the disproportionating enzyme family.

It is found in the cytoplasm. The enzyme catalyses Transfers a segment of a (1-&gt;4)-alpha-D-glucan to a new position in an acceptor, which may be glucose or a (1-&gt;4)-alpha-D-glucan.. This is 4-alpha-glucanotransferase (malQ) from Chlamydia pneumoniae (Chlamydophila pneumoniae).